Consider the following 169-residue polypeptide: Cytochrome c oxidase subunit 4 isoform 1, mitochondrial (169 aa).

A mitochondrion-targeting transit peptide spans 1–22 (MLASRALSLIGKRAISTSVCLR). The Mitochondrial matrix segment spans residues 23–99 (AHGSVVKSED…FAEMNRGTNE (77 aa)). Residue lysine 29 is modified to N6-acetyllysine; alternate. Position 29 is an N6-succinyllysine; alternate (lysine 29). A phosphoserine mark is found at serine 56 and serine 58. Lysine 60 carries the post-translational modification N6-acetyllysine; alternate. At lysine 60 the chain carries N6-succinyllysine; alternate. Lysine 67 is subject to N6-acetyllysine. Residues 100–125 (WKTVVGMAMFFIGFTALVLIWEKSYV) form a helical membrane-spanning segment. Residues 126 to 169 (YGPIPHTFDRDWVAMQTKRMLDMKANPIQGFSAKWDYDKNEWKK) lie on the Mitochondrial intermembrane side of the membrane.

The protein belongs to the cytochrome c oxidase IV family. As to quaternary structure, component of the cytochrome c oxidase (complex IV, CIV), a multisubunit enzyme composed of 14 subunits. The complex is composed of a catalytic core of 3 subunits MT-CO1, MT-CO2 and MT-CO3, encoded in the mitochondrial DNA, and 11 supernumerary subunits COX4I, COX5A, COX5B, COX6A, COX6B, COX6C, COX7A, COX7B, COX7C, COX8 and NDUFA4, which are encoded in the nuclear genome. The complex exists as a monomer or a dimer and forms supercomplexes (SCs) in the inner mitochondrial membrane with NADH-ubiquinone oxidoreductase (complex I, CI) and ubiquinol-cytochrome c oxidoreductase (cytochrome b-c1 complex, complex III, CIII), resulting in different assemblies (supercomplex SCI(1)III(2)IV(1) and megacomplex MCI(2)III(2)IV(2)). Interacts with PHB2; the interaction decreases in absence of SPHK2. Interacts with AFG1L. Interacts with ABCB7; this interaction allows the regulation of cellular iron homeostasis and cellular reactive oxygen species (ROS) levels in cardiomyocytes. Interacts with FLVCR2; this interaction occurs in the absence of heme and is disrupted upon heme binding. Interacts with IRGC.

Its subcellular location is the mitochondrion inner membrane. The protein operates within energy metabolism; oxidative phosphorylation. Functionally, component of the cytochrome c oxidase, the last enzyme in the mitochondrial electron transport chain which drives oxidative phosphorylation. The respiratory chain contains 3 multisubunit complexes succinate dehydrogenase (complex II, CII), ubiquinol-cytochrome c oxidoreductase (cytochrome b-c1 complex, complex III, CIII) and cytochrome c oxidase (complex IV, CIV), that cooperate to transfer electrons derived from NADH and succinate to molecular oxygen, creating an electrochemical gradient over the inner membrane that drives transmembrane transport and the ATP synthase. Cytochrome c oxidase is the component of the respiratory chain that catalyzes the reduction of oxygen to water. Electrons originating from reduced cytochrome c in the intermembrane space (IMS) are transferred via the dinuclear copper A center (CU(A)) of subunit 2 and heme A of subunit 1 to the active site in subunit 1, a binuclear center (BNC) formed by heme A3 and copper B (CU(B)). The BNC reduces molecular oxygen to 2 water molecules using 4 electrons from cytochrome c in the IMS and 4 protons from the mitochondrial matrix. This chain is Cytochrome c oxidase subunit 4 isoform 1, mitochondrial (Cox4i1), found in Mus musculus (Mouse).